A 509-amino-acid chain; its full sequence is MEEFQRYIELDRSWQHNFVYPLIFQEYIYGFAYDHGLNKYILLENAGDKKYSLLIVKRLINRMYQQTHWILFANHSNQNDFFGHKHKKNLYYQIISEGFAVIVEIPFSPLLISSLEAKEKKIVKSHNLRSIHSIFPFFEDKFLHLNYVLEILIPYPIHLEILVQTLRYWVKDASSLHLLRFFLYEYRNWNSLITPQKSISIFSKRNQRLFLFLYNFHVCEYESIFVFLCNQSSHLRSTSFGALLERNYFYGKLEYLVKVFTFTKDFCVILWLLKDPFLHYVRYRGKSILASKGTPLLMHKWKYFLFNFWQCHFSLWSPPRRIYINRLSKHSLDFMGFFSSVRLNSSVVRSQMVENSFLIDNPIKKFDTIVRIIPLVGSLAKAKFCNVLGHPISKSVWTDLLDSDIMDRFGRICRNLSHYYSGSSRKKSLYRIKYILRLSCARTLARKHKSTVRAFLKRLGSEFLEEFFTEEEKVLSLILPRDSSISRGLYRGPFWYLDIICIHDLANDE.

The protein belongs to the intron maturase 2 family. MatK subfamily.

It localises to the plastid. Its subcellular location is the chloroplast. In terms of biological role, usually encoded in the trnK tRNA gene intron. Probably assists in splicing its own and other chloroplast group II introns. The chain is Maturase K from Schlumbergera truncata (Thanksgiving cactus).